The chain runs to 398 residues: Isopenicillin N epimerase (398 aa).

At Lys-217 the chain carries N6-(pyridoxal phosphate)lysine.

Belongs to the class-V pyridoxal-phosphate-dependent aminotransferase family. The cofactor is pyridoxal 5'-phosphate.

It catalyses the reaction isopenicillin N = penicillin N. It functions in the pathway antibiotic biosynthesis; cephalosporin C biosynthesis. Catalyzes the reversible isomerization between isopenicillin N and penicillin N. The sequence is that of Isopenicillin N epimerase (cefD) from Streptomyces clavuligerus.